Reading from the N-terminus, the 563-residue chain is Serine/threonine-protein kinase WNK8 (563 aa).

In terms of domain architecture, Protein kinase spans 29–286 (IRYDDVLGRG…ALELSKDPFL (258 aa)). ATP is bound by residues 109–112 (TELF) and K159. D176 serves as the catalytic Proton acceptor. Over residues 426–436 (TSSHHNQNSPR) the composition is skewed to polar residues. Residues 426 to 459 (TSSHHNQNSPRLTHEDHEAANQQTVNSKDEEAAG) are disordered. S509 bears the Phosphoserine mark.

It belongs to the protein kinase superfamily. Ser/Thr protein kinase family. WNK subfamily. In terms of assembly, interacts with RGS1 and GB1, but not with GPA1. The association with RGS1 at the plasma membrane is triggered by induction of glucose. Binds to EDM2 in nucleus. In terms of processing, autophosphorylated.

The protein resides in the nucleus. It catalyses the reaction L-seryl-[protein] + ATP = O-phospho-L-seryl-[protein] + ADP + H(+). The catalysed reaction is L-threonyl-[protein] + ATP = O-phospho-L-threonyl-[protein] + ADP + H(+). Functionally, regulates flowering time by modulating the photoperiod pathway. Phosphorylates the vacuolar ATPase subunit C (VATC) and RGS1. Regulates EDM2 that, in turn, modulates development processes. This is Serine/threonine-protein kinase WNK8 (WNK8) from Arabidopsis thaliana (Mouse-ear cress).